The chain runs to 214 residues: Putative pyrophosphatase PpaX (214 aa).

The active-site Nucleophile is the Asp8.

It belongs to the HAD-like hydrolase superfamily. PpaX family. It depends on Mg(2+) as a cofactor.

The catalysed reaction is diphosphate + H2O = 2 phosphate + H(+). In Clostridium perfringens (strain 13 / Type A), this protein is Putative pyrophosphatase PpaX.